A 246-amino-acid chain; its full sequence is Ribonuclease PH (246 aa).

Residues Arg86 and 124 to 126 each bind phosphate; that span reads GTR.

Belongs to the RNase PH family. As to quaternary structure, homohexameric ring arranged as a trimer of dimers.

It catalyses the reaction tRNA(n+1) + phosphate = tRNA(n) + a ribonucleoside 5'-diphosphate. Its function is as follows. Phosphorolytic 3'-5' exoribonuclease that plays an important role in tRNA 3'-end maturation. Removes nucleotide residues following the 3'-CCA terminus of tRNAs; can also add nucleotides to the ends of RNA molecules by using nucleoside diphosphates as substrates, but this may not be physiologically important. Probably plays a role in initiation of 16S rRNA degradation (leading to ribosome degradation) during starvation. The polypeptide is Ribonuclease PH (Bacillus licheniformis (strain ATCC 14580 / DSM 13 / JCM 2505 / CCUG 7422 / NBRC 12200 / NCIMB 9375 / NCTC 10341 / NRRL NRS-1264 / Gibson 46)).